We begin with the raw amino-acid sequence, 383 residues long: Homeobox protein SHOOT MERISTEMLESS (383 aa).

The interval 37 to 58 (HQQHHGHDQQHQHQQQHDGYAY) is disordered. The ELK domain occupies 263–283 (ELKGQLLRKYSGYLGSLKQEF). Residues 284 to 347 (MKKRKKGKLP…NQRKRHWKPS (64 aa)) constitute a DNA-binding region (homeobox; TALE-type).

This sequence belongs to the TALE/KNOX homeobox family.

It is found in the nucleus. Functionally, required for shoot apical meristem formation during embryogenesis. Probably binds to the DNA sequence 5'-TGAC-3'. In Brassica oleracea (Wild cabbage), this protein is Homeobox protein SHOOT MERISTEMLESS (STM).